The primary structure comprises 244 residues: Haloacid dehalogenase-like hydrolase domain-containing protein 3 (244 aa).

It belongs to the HAD-like hydrolase superfamily.

This is Haloacid dehalogenase-like hydrolase domain-containing protein 3 (hdhd3) from Xenopus laevis (African clawed frog).